Here is a 2290-residue protein sequence, read N- to C-terminus: Protein Ycf2 (2290 aa).

Residues 505-530 (GSNPTERSTRDQKSLKKQQDVSFVPP) form a disordered region. Residues 511-523 (RSTRDQKSLKKQQ) are compositionally biased toward basic and acidic residues. Residue 1639-1646 (GSIGTGRS) participates in ATP binding.

The protein belongs to the Ycf2 family.

The protein localises to the plastid. It is found in the chloroplast stroma. In terms of biological role, probable ATPase of unknown function. Its presence in a non-photosynthetic plant (Epifagus virginiana) and experiments in tobacco indicate that it has an essential function which is probably not related to photosynthesis. The sequence is that of Protein Ycf2 from Ceratophyllum demersum (Rigid hornwort).